A 666-amino-acid polypeptide reads, in one-letter code: tRNA 5-methylaminomethyl-2-thiouridine biosynthesis bifunctional protein MnmC (666 aa).

A tRNA (mnm(5)s(2)U34)-methyltransferase region spans residues 1-253; that stretch reads MSSPFVPIIT…KRHMICAHYE (253 aa). The FAD-dependent cmnm(5)s(2)U34 oxidoreductase stretch occupies residues 283–666; the sequence is VGGGLAGCFI…FLRKKIIQGP (384 aa).

The protein in the N-terminal section; belongs to the methyltransferase superfamily. tRNA (mnm(5)s(2)U34)-methyltransferase family. In the C-terminal section; belongs to the DAO family. Requires FAD as cofactor.

The protein resides in the cytoplasm. It catalyses the reaction 5-aminomethyl-2-thiouridine(34) in tRNA + S-adenosyl-L-methionine = 5-methylaminomethyl-2-thiouridine(34) in tRNA + S-adenosyl-L-homocysteine + H(+). Its function is as follows. Catalyzes the last two steps in the biosynthesis of 5-methylaminomethyl-2-thiouridine (mnm(5)s(2)U) at the wobble position (U34) in tRNA. Catalyzes the FAD-dependent demodification of cmnm(5)s(2)U34 to nm(5)s(2)U34, followed by the transfer of a methyl group from S-adenosyl-L-methionine to nm(5)s(2)U34, to form mnm(5)s(2)U34. The chain is tRNA 5-methylaminomethyl-2-thiouridine biosynthesis bifunctional protein MnmC from Legionella pneumophila subsp. pneumophila (strain Philadelphia 1 / ATCC 33152 / DSM 7513).